The sequence spans 150 residues: Pyruvoyl-dependent arginine decarboxylase (150 aa).

Residue Ser-42 is modified to Pyruvic acid (Ser).

This sequence belongs to the PdaD family. Requires pyruvate as cofactor.

It catalyses the reaction L-arginine + H(+) = agmatine + CO2. This Methanopyrus kandleri (strain AV19 / DSM 6324 / JCM 9639 / NBRC 100938) protein is Pyruvoyl-dependent arginine decarboxylase.